The sequence spans 201 residues: Peptidyl-tRNA hydrolase (201 aa).

A tRNA-binding site is contributed by Y15. H20 (proton acceptor) is an active-site residue. TRNA-binding residues include Y66, N68, and N114.

It belongs to the PTH family. As to quaternary structure, monomer.

It is found in the cytoplasm. The catalysed reaction is an N-acyl-L-alpha-aminoacyl-tRNA + H2O = an N-acyl-L-amino acid + a tRNA + H(+). Its function is as follows. Hydrolyzes ribosome-free peptidyl-tRNAs (with 1 or more amino acids incorporated), which drop off the ribosome during protein synthesis, or as a result of ribosome stalling. Functionally, catalyzes the release of premature peptidyl moieties from peptidyl-tRNA molecules trapped in stalled 50S ribosomal subunits, and thus maintains levels of free tRNAs and 50S ribosomes. The chain is Peptidyl-tRNA hydrolase from Burkholderia pseudomallei (strain K96243).